Here is a 413-residue protein sequence, read N- to C-terminus: MQSWSDTALPSVPGQGPPLRLYDTADRQVRPVTPGKKATMYVCGITPYDATHLGHAATYLTFDLVNRIWRDAGHDVHYVQNVTDVDDPLFERANRDGEDWIVLGIRETALFREDMEALRVLPPKDYIGAVESVNEVVELVEKFVASGAAYIVDDAEFPDVYFRADATEQFGYESGYDRATMEKFFAERGGDPDRVGKRNPLDALVWRAERPGEPSWPSPFGPGRPGWHIECAAIALNRIGSGFDVQGGGSDLIFPHHEFSAAHAESATGDRRFARHYVHTGMIGLDGEKMSKSRGNLVFVSKLRGEGVDPAAIRLGLLSGHYRQDRAWTDQVLEDAQSRLKVWREAAALDSAPSATDTVARLRQHLADDLDTPKALDALDGWARRAIEGGGSDTQAPGEFADAVDALLGISLR.

A disordered region spans residues 1–21 (MQSWSDTALPSVPGQGPPLRL). Cysteine 43 contacts Zn(2+). L-cysteinyl-5'-AMP is bound by residues 43–46 (CGIT), threonine 58, and 81–83 (NVT). The 'HIGH' region signature appears at 45–55 (ITPYDATHLGH). The 'ERGGDP' region motif lies at 187 to 192 (ERGGDP). Tryptophan 227 is an L-cysteinyl-5'-AMP binding site. Zn(2+) is bound at residue cysteine 231. Position 249–251 (249–251 (GSD)) interacts with L-cysteinyl-5'-AMP. Histidine 256 is a binding site for Zn(2+). Isoleucine 283 serves as a coordination point for L-cysteinyl-5'-AMP. The 'KMSKS' region signature appears at 289–293 (KMSKS).

It belongs to the class-I aminoacyl-tRNA synthetase family. MshC subfamily. In terms of assembly, monomer. It depends on Zn(2+) as a cofactor.

It carries out the reaction 1D-myo-inositol 2-amino-2-deoxy-alpha-D-glucopyranoside + L-cysteine + ATP = 1D-myo-inositol 2-(L-cysteinylamino)-2-deoxy-alpha-D-glucopyranoside + AMP + diphosphate + H(+). Functionally, catalyzes the ATP-dependent condensation of GlcN-Ins and L-cysteine to form L-Cys-GlcN-Ins. This Rhodococcus erythropolis (strain PR4 / NBRC 100887) protein is L-cysteine:1D-myo-inositol 2-amino-2-deoxy-alpha-D-glucopyranoside ligase.